We begin with the raw amino-acid sequence, 62 residues long: Large ribosomal subunit protein bL28 (62 aa).

It belongs to the bacterial ribosomal protein bL28 family.

The sequence is that of Large ribosomal subunit protein bL28 from Halalkalibacterium halodurans (strain ATCC BAA-125 / DSM 18197 / FERM 7344 / JCM 9153 / C-125) (Bacillus halodurans).